The primary structure comprises 408 residues: Echinulin prenyltransferase 2 (408 aa).

The dimethylallyl diphosphate site is built by Arg-94, Lys-181, Tyr-183, Arg-248, Lys-250, Tyr-252, Gln-334, Tyr-336, Tyr-400, and Tyr-404.

Belongs to the tryptophan dimethylallyltransferase family.

It catalyses the reaction preechinulin + dimethylallyl diphosphate = tardioxopiperazine B + diphosphate. The enzyme catalyses preechinulin + dimethylallyl diphosphate = tardioxopiperazine A + diphosphate. It carries out the reaction tardioxopiperazine A + dimethylallyl diphosphate = echinulin + diphosphate. The catalysed reaction is tardioxopiperazine A + dimethylallyl diphosphate = variecolorin L + diphosphate. It catalyses the reaction neoechinulin A + dimethylallyl diphosphate = variecolorin G + diphosphate. The enzyme catalyses neoechinulin A + dimethylallyl diphosphate = isoechinulin A + diphosphate. It carries out the reaction isoechinulin A + dimethylallyl diphosphate = dehydroechinulin + diphosphate. The catalysed reaction is neoechinulin B + dimethylallyl diphosphate = isoechinulin B + diphosphate. It participates in secondary metabolite biosynthesis. Its pathway is alkaloid biosynthesis. In terms of biological role, prenyltransferase; part of the gene cluster that mediates the biosynthesis of echinulin family alkaloid. The pathway begins with the biosynthesis of the cyclic dipeptide cyclo-L-Trp-L-Ala (cyclo-TA) by the NRPS echPS via condensation of L-alanine and L-tryptophan. The prenyltransferase echPT1 then catalyzes the first prenylation step, a reverse prenylation reaction at C2, to yield preechinulin. Preechinulin is the substrate of the cytochrome P450 monooxygenase echP450 that catalyzes the formation of the double bond between C10 and C11 to produce neoechulin A. The unique prenyltransferase echPT2 functions as a competitive enzyme with echP450 for preechinulin metabolization and uses preechinulin for effective regiospecific prenylations. Preechinulin is prenylated by echPT2 at C5 or C7. C7-prenylation leads to accumulation of tardioxopiperazine B without further modification by echPT2. In contrast, the C5-prenylated tardioxopiperazine A can be prenylated again by echPT2, predominantly at C7 to form echinulin or less frequently at C4 to give variecolorin L. EchPT2 also accepts neoechilunin A to produce varlecolorin G (prenylation at C5) or isoechinulin A (prenylation at C7). EchPT2 further converts isoechinulin A into dehydroechinulin. Moreover, a yet unidentified enzyme can also convert neoechilunin A into neoechilunin B by introducing a double bond between positions C14 and C17 and thus provides a further substrate to echPT2 for C5 and C7 prenylation. In Aspergillus ruber (Eurotium rubrum), this protein is Echinulin prenyltransferase 2.